The primary structure comprises 307 residues: MSSRYSPYRIRNVGERRRVQERLLSEFNSRPVTAVAAVCAVCLETYCVQSNNIIDFLMPSECTHLFCYKCVLNMYKNAMNVPRAAVSCPMCNKKVGTWQAFFPNSVVSCKFIKKTGDRTPACLQFMLALKTIQDRYMATEEEAETEPSFVIKNLQAQLDAAQKEARDLQESMERQKQAHNVAWNSSCEQVTALQTTLADMQAQLDRSEALSSTLAEHNRAANVQIDSLRRAVQRLEAAQSAPVSVNVEFNDNARQNTNLHERFRSYVYSTVSDMMIEDSIKSLQSHVFGAACLPCSVNVEINFPFDE.

The segment at 39–92 (CAVCLETYCVQSNNIIDFLMPSECTHLFCYKCVLNMYKNAMNVPRAAVSCPMCN) adopts an RING-type zinc-finger fold.

The polypeptide is Major immediate early protein (PE38) (Orgyia pseudotsugata multicapsid polyhedrosis virus (OpMNPV)).